A 141-amino-acid chain; its full sequence is Large ribosomal subunit protein uL11 (141 aa).

This sequence belongs to the universal ribosomal protein uL11 family. As to quaternary structure, part of the ribosomal stalk of the 50S ribosomal subunit. Interacts with L10 and the large rRNA to form the base of the stalk. L10 forms an elongated spine to which L12 dimers bind in a sequential fashion forming a multimeric L10(L12)X complex. One or more lysine residues are methylated.

Forms part of the ribosomal stalk which helps the ribosome interact with GTP-bound translation factors. The chain is Large ribosomal subunit protein uL11 from Prochlorococcus marinus (strain MIT 9215).